Reading from the N-terminus, the 231-residue chain is Ribosomal RNA small subunit methyltransferase G (231 aa).

S-adenosyl-L-methionine contacts are provided by residues glycine 75, phenylalanine 80, alanine 126–glutamate 127, and arginine 142.

The protein belongs to the methyltransferase superfamily. RNA methyltransferase RsmG family.

It localises to the cytoplasm. Specifically methylates the N7 position of a guanine in 16S rRNA. This Mycoplasma capricolum subsp. capricolum (strain California kid / ATCC 27343 / NCTC 10154) protein is Ribosomal RNA small subunit methyltransferase G.